The following is a 340-amino-acid chain: HTH-type transcriptional regulator PtxS (340 aa).

Positions 12–67 (VTISEVAQAAGVSKATVSRYIGGDRQLLADATAQRIEAVIEQLGYRPNRMASALKR) constitute an HTH lacI-type domain. A DNA-binding region (H-T-H motif) is located at residues 14–33 (ISEVAQAAGVSKATVSRYIG).

Homodimer.

Its activity is regulated as follows. 2-ketogluconate acts as a molecular effector and causes dissociation of PtxS from its target promoter. Glucose negatively affects the molecular binding of PtxS and 2KGA, and gluconic acid inhibits the PtxS-2KGA binding reaction. Its function is as follows. Involved in the regulation of 2-ketogluconic acid metabolism via the control of the expression of the kgu operon. Binds directly to a 14-bp palindrome sequence via its conserved HTH motif. This Pseudomonas plecoglossicida protein is HTH-type transcriptional regulator PtxS.